A 264-amino-acid polypeptide reads, in one-letter code: MKQYLELIQKVLDEGTQKNDRTGTGTLSIFGHQMRFNLLEGFPLVTTKRCHLRSIIHELLWFLQGDTNIAYLHENNVTIWDEWADENGDLGPVYGKQWRAWPTPDGRHIDQIATVLSQLKNDPDSRRIIVSAWNVGELDKMALAPCHAFFQFYVADGKLSCQLYQRSCDVFLGLPFNIASYALLVHMMAQQCDLDVGDFVWTGGDTHLYSNHMEQTHLQLSREPRALPKLVIKRKPDSLFDYRFDDFEIEGYDPHPGIKAPVAI.

Arg21 provides a ligand contact to dUMP. His51 contributes to the (6R)-5,10-methylene-5,6,7,8-tetrahydrofolate binding site. 126–127 (RR) provides a ligand contact to dUMP. Catalysis depends on Cys146, which acts as the Nucleophile. DUMP contacts are provided by residues 166–169 (RSCD), Asn177, and 207–209 (HLY). Asp169 provides a ligand contact to (6R)-5,10-methylene-5,6,7,8-tetrahydrofolate. Position 263 (Ala263) interacts with (6R)-5,10-methylene-5,6,7,8-tetrahydrofolate.

This sequence belongs to the thymidylate synthase family. Bacterial-type ThyA subfamily. As to quaternary structure, homodimer.

The protein resides in the cytoplasm. It catalyses the reaction dUMP + (6R)-5,10-methylene-5,6,7,8-tetrahydrofolate = 7,8-dihydrofolate + dTMP. Its pathway is pyrimidine metabolism; dTTP biosynthesis. Functionally, catalyzes the reductive methylation of 2'-deoxyuridine-5'-monophosphate (dUMP) to 2'-deoxythymidine-5'-monophosphate (dTMP) while utilizing 5,10-methylenetetrahydrofolate (mTHF) as the methyl donor and reductant in the reaction, yielding dihydrofolate (DHF) as a by-product. This enzymatic reaction provides an intracellular de novo source of dTMP, an essential precursor for DNA biosynthesis. The sequence is that of Thymidylate synthase from Salmonella typhi.